A 240-amino-acid chain; its full sequence is Probable transcriptional regulatory protein A2cp1_1765 (240 aa).

This sequence belongs to the TACO1 family.

It is found in the cytoplasm. In Anaeromyxobacter dehalogenans (strain 2CP-1 / ATCC BAA-258), this protein is Probable transcriptional regulatory protein A2cp1_1765.